Consider the following 201-residue polypeptide: Histidinol dehydrogenase (201 aa).

This sequence belongs to the histidinol dehydrogenase family. As to quaternary structure, homodimer. It depends on Zn(2+) as a cofactor.

It catalyses the reaction L-histidinol + 2 NAD(+) + H2O = L-histidine + 2 NADH + 3 H(+). Its pathway is amino-acid biosynthesis; L-histidine biosynthesis; L-histidine from 5-phospho-alpha-D-ribose 1-diphosphate: step 9/9. Its function is as follows. Catalyzes the sequential NAD-dependent oxidations of L-histidinol to L-histidinaldehyde and then to L-histidine. The sequence is that of Histidinol dehydrogenase (hisD) from Buchnera aphidicola subsp. Diuraphis noxia.